The sequence spans 456 residues: Molybdate transporter 1 (456 aa).

9 helical membrane passes run 67–87 (LIFT…PMPV), 110–130 (IMAA…SGLM), 133–153 (VFNI…GLAF), 177–197 (PWLG…IVLV), 225–245 (VIAN…LAFI), 309–329 (AASV…FGAM), 354–374 (LLGV…VGIL), 377–397 (FPVG…AMAA), and 417–437 (LGSN…VLWM).

Belongs to the SLC26A/SulP transporter (TC 2.A.53) family. Strongly expressed in roots. Detected in the vascular tissues of hypocotyls, in petioles and vascular tissues of cotyledons and leaves, in mesophyll cells, stamen, sepals and siliques.

Its subcellular location is the cell membrane. The protein localises to the endomembrane system. It localises to the mitochondrion membrane. Not inhibited by sulfate. In terms of biological role, high affinity molybdate transporter. Unable to transport sulfate. This is Molybdate transporter 1 (MOT1) from Arabidopsis thaliana (Mouse-ear cress).